The following is a 552-amino-acid chain: Rhodopsin kinase GRK7 (552 aa).

Ser36 bears the Phosphoserine; by PKA mark. Residues 56-176 (FHSLCEQQPI…LASPFYDKFL (121 aa)) form the RGS domain. Positions 191-454 (FEEFRVLGKG…SDDPRKHHFF (264 aa)) constitute a Protein kinase domain. ATP-binding positions include 197-205 (LGKGGFGEV) and Lys220. The Proton acceptor role is filled by Asp316. One can recognise an AGC-kinase C-terminal domain in the interval 455–520 (KTINFPRLEA…GAVPIAWQEE (66 aa)). Position 549 is a cysteine methyl ester (Cys549). Cys549 carries the S-geranylgeranyl cysteine lipid modification. Residues 550–552 (LLL) constitute a propeptide, removed in mature form.

It belongs to the protein kinase superfamily. AGC Ser/Thr protein kinase family. GPRK subfamily. Interacts (when prenylated) with PDE6D; this promotes release from membranes. Post-translationally, autophosphorylated in vitro at Ser-490. Phosphorylation at Ser-36 is regulated by light and activated by cAMP.

It localises to the membrane. It catalyses the reaction L-threonyl-[rhodopsin] + ATP = O-phospho-L-threonyl-[rhodopsin] + ADP + H(+). The catalysed reaction is L-seryl-[rhodopsin] + ATP = O-phospho-L-seryl-[rhodopsin] + ADP + H(+). Its activity is regulated as follows. Inhibited by phosphorylation of Ser-36. In terms of biological role, retina-specific kinase involved in the shutoff of the photoresponse and adaptation to changing light conditions via cone opsin phosphorylation, including rhodopsin (RHO). This chain is Rhodopsin kinase GRK7 (GRK7), found in Bos taurus (Bovine).